A 582-amino-acid polypeptide reads, in one-letter code: Proline--tRNA ligase (582 aa).

The protein belongs to the class-II aminoacyl-tRNA synthetase family. ProS type 1 subfamily. Homodimer.

The protein localises to the cytoplasm. The catalysed reaction is tRNA(Pro) + L-proline + ATP = L-prolyl-tRNA(Pro) + AMP + diphosphate. Functionally, catalyzes the attachment of proline to tRNA(Pro) in a two-step reaction: proline is first activated by ATP to form Pro-AMP and then transferred to the acceptor end of tRNA(Pro). As ProRS can inadvertently accommodate and process non-cognate amino acids such as alanine and cysteine, to avoid such errors it has two additional distinct editing activities against alanine. One activity is designated as 'pretransfer' editing and involves the tRNA(Pro)-independent hydrolysis of activated Ala-AMP. The other activity is designated 'posttransfer' editing and involves deacylation of mischarged Ala-tRNA(Pro). The misacylated Cys-tRNA(Pro) is not edited by ProRS. This Mycobacterium bovis (strain ATCC BAA-935 / AF2122/97) protein is Proline--tRNA ligase.